The sequence spans 108 residues: Nitrogenase-stabilizing/protective protein NifW (108 aa).

The protein belongs to the NifW family. In terms of assembly, homotrimer; associates with NifD.

In terms of biological role, may protect the nitrogenase Fe-Mo protein from oxidative damage. The chain is Nitrogenase-stabilizing/protective protein NifW from Zymomonas mobilis subsp. mobilis (strain ATCC 31821 / ZM4 / CP4).